Here is a 306-residue protein sequence, read N- to C-terminus: Probable 2-dehydro-3-deoxygalactonokinase DgoK1 (306 aa).

The protein belongs to the DgoK family.

The catalysed reaction is 2-dehydro-3-deoxy-D-galactonate + ATP = 2-dehydro-3-deoxy-6-phospho-D-galactonate + ADP + H(+). The protein operates within carbohydrate acid metabolism; D-galactonate degradation; D-glyceraldehyde 3-phosphate and pyruvate from D-galactonate: step 2/3. In terms of biological role, involved in the degradation of galactose via the DeLey-Doudoroff pathway. The polypeptide is Probable 2-dehydro-3-deoxygalactonokinase DgoK1 (dgoK1) (Rhizobium meliloti (strain 1021) (Ensifer meliloti)).